The primary structure comprises 90 residues: Barstar (90 aa).

Belongs to the barstar family.

It localises to the cytoplasm. In terms of biological role, inhibitor of the ribonuclease barnase. Forms a one-to-one non-covalent complex. The sequence is that of Barstar from Bacillus amyloliquefaciens (Bacillus velezensis).